Consider the following 82-residue polypeptide: ATP synthase subunit 9, mitochondrial (82 aa).

Transmembrane regions (helical) follow at residues 8–28 and 45–67; these read IGAG…GNVF and SFGY…PMMA.

The protein belongs to the ATPase C chain family. F-type ATPases have 2 components, CF(1) - the catalytic core - and CF(0) - the membrane proton channel. CF(1) has five subunits: alpha(3), beta(3), gamma(1), delta(1), epsilon(1). CF(0) has three main subunits: a, b and c.

It is found in the mitochondrion membrane. Its function is as follows. This protein is one of the chains of the nonenzymatic membrane component (F0) of mitochondrial ATPase. The protein is ATP synthase subunit 9, mitochondrial (ATP9) of Malus domestica (Apple).